A 1244-amino-acid chain; its full sequence is Membrane-associated phosphatidylinositol transfer protein 1 (1244 aa).

Position 59 is a phosphothreonine (T59). Disordered regions lie at residues 258-331 (KCNT…QSLS) and 339-358 (ARDSENSSEEEFFDAHEGFS). T287 is subject to Phosphothreonine; by CDK1. The span at 299-319 (ASPDASFGKQWSSSSRSSYSS) shows a compositional bias: low complexity. A phosphoserine mark is found at S300, S304, S319, S326, S329, S342, S345, S346, and S373. Phosphoserine; by CDK1 is present on S382. The tract at residues 581 to 682 (AGTGSRGSSR…SSEAPDGPSS (102 aa)) is disordered. 3 positions are modified to phosphoserine: S593, S600, and S621. The segment covering 643 to 658 (GSQNSLQAAPATTSSW) has biased composition (polar residues). Residues 686-880 (LDFKVSGFFL…VAFILRQVIE (195 aa)) enclose the DDHD domain. S896 is modified (phosphoserine). Residues 1206–1244 (QLLRSRGPSQAEREGPGTPPTTLARGKARSISLKLDSEE) are disordered. Omega-N-methylarginine is present on residues R1211 and R1218. S1237 is subject to Phosphoserine.

It belongs to the PtdIns transfer protein family. PI transfer class IIA subfamily. In terms of assembly, interacts with PIK4CA. Interacts with PTK2B via its C-terminus. Interacts with RHOA. Has higher affinity for the inactive, GDP-bound form of RHOA. The CDK1-phosphorylated form interacts with PLK1. Interacts with VAPB. In terms of processing, phosphorylated on multiple sites by CDK1 at the onset of mitosis. Phosphorylation facilitates dissociation from the Golgi complex and is required for interaction with PLK1. Phosphorylated on threonine residues upon treatment with oleic acid. Post-translationally, phosphorylated on tyrosine residues by PTK2B. In terms of tissue distribution, ubiquitous.

Its subcellular location is the cytoplasm. The protein localises to the golgi apparatus. It is found in the golgi stack membrane. It localises to the endoplasmic reticulum membrane. The protein resides in the lipid droplet. Its subcellular location is the cleavage furrow. The protein localises to the midbody. It carries out the reaction a 1,2-diacyl-sn-glycero-3-phospho-(1D-myo-inositol)(in) = a 1,2-diacyl-sn-glycero-3-phospho-(1D-myo-inositol)(out). In terms of biological role, catalyzes the transfer of phosphatidylinositol (PI) between membranes. Binds PI, phosphatidylcholine (PC) and phosphatidic acid (PA) with the binding affinity order of PI &gt; PA &gt; PC. Regulates RHOA activity, and plays a role in cytoskeleton remodeling. Necessary for normal completion of cytokinesis. Plays a role in maintaining normal diacylglycerol levels in the Golgi apparatus. Necessary for maintaining the normal structure of the endoplasmic reticulum and the Golgi apparatus. Required for protein export from the endoplasmic reticulum and the Golgi. Binds calcium ions. This Homo sapiens (Human) protein is Membrane-associated phosphatidylinositol transfer protein 1 (PITPNM1).